Here is a 102-residue protein sequence, read N- to C-terminus: Small ribosomal subunit protein uS10 (102 aa).

This sequence belongs to the universal ribosomal protein uS10 family. Part of the 30S ribosomal subunit.

Functionally, involved in the binding of tRNA to the ribosomes. The sequence is that of Small ribosomal subunit protein uS10 from Hyperthermus butylicus (strain DSM 5456 / JCM 9403 / PLM1-5).